Reading from the N-terminus, the 932-residue chain is DNA mismatch repair protein MutS (932 aa).

Acidic residues predominate over residues 1–13 (MTTDTDTDVDAGT). Residues 1-26 (MTTDTDTDVDAGTDLEPQPEGPPEKM) form a disordered region. 648-655 (GPNMSGKS) is a binding site for ATP. The segment at 865 to 892 (NQQNQASDDDEIARSPRGADTNTDAGIN) is disordered.

The protein belongs to the DNA mismatch repair MutS family.

In terms of biological role, this protein is involved in the repair of mismatches in DNA. It is possible that it carries out the mismatch recognition step. This protein has a weak ATPase activity. This Haloquadratum walsbyi (strain DSM 16790 / HBSQ001) protein is DNA mismatch repair protein MutS.